The following is an 853-amino-acid chain: DNA mismatch repair protein MutS (853 aa).

614 to 621 (GPNMGGKS) lines the ATP pocket.

Belongs to the DNA mismatch repair MutS family.

In terms of biological role, this protein is involved in the repair of mismatches in DNA. It is possible that it carries out the mismatch recognition step. This protein has a weak ATPase activity. This chain is DNA mismatch repair protein MutS, found in Escherichia coli O157:H7 (strain EC4115 / EHEC).